The primary structure comprises 344 residues: MINEDSIQLDTLLKKYYEHSIEKIVFADDNGKIIAMNDAAKDILSEEDNYSAVANAICHRCEGYTNAYDVQSCKDCFLESMQVQATNFQVFMKTKDQKVMPFTATYQLIDQDRGIHAFTLQNVSSQIEQQEKLHQQHMMRKTISAQENERKRISRELHDSVIQEMLNVDVQLRLLKYQEDTTKLLEDAENIEYIVAKLIDDIRNMSVELRPASLDDLGLEAAFKSYFKQFEENYGIKIIYTSNIKNTRFDSDIETVVYRVVQEAILNALKYADVNEINVGIRQTGRHLVAEVIDAGNGFDPSSKPKGSGLGLYGMNERAELVSGSVNIETKIGEGTNVTLNIPI.

Cys58, Cys61, Cys73, and Cys76 together coordinate [4Fe-4S] cluster. Residues 152-344 (RISRELHDSV…GTNVTLNIPI (193 aa)) form the Histidine kinase domain. Position 158 is a phosphohistidine; by autocatalysis (His158).

The cofactor is [4Fe-4S] cluster. Autophosphorylated.

The protein localises to the cytoplasm. It carries out the reaction ATP + protein L-histidine = ADP + protein N-phospho-L-histidine.. In terms of biological role, member of the two-component regulatory system NreB/NreC involved in the control of dissimilatory nitrate/nitrite reduction in response to oxygen. NreB functions as a direct oxygen sensor histidine kinase which is autophosphorylated, in the absence of oxygen, probably at the conserved histidine residue, and transfers its phosphate group probably to a conserved aspartate residue of NreC. NreB/NreC activates the expression of the nitrate (narGHJI) and nitrite (nir) reductase operons, as well as the putative nitrate transporter gene narT. In Staphylococcus aureus (strain Mu3 / ATCC 700698), this protein is Oxygen sensor histidine kinase NreB (nreB).